A 579-amino-acid chain; its full sequence is Putative adenine deaminase OB0751 (579 aa).

This sequence belongs to the metallo-dependent hydrolases superfamily. Adenine deaminase family.

It catalyses the reaction adenine + H2O + H(+) = hypoxanthine + NH4(+). The sequence is that of Putative adenine deaminase OB0751 from Oceanobacillus iheyensis (strain DSM 14371 / CIP 107618 / JCM 11309 / KCTC 3954 / HTE831).